A 231-amino-acid chain; its full sequence is NADH-ubiquinone oxidoreductase chain 4 (231 aa).

The next 7 membrane-spanning stretches (helical) occupy residues 1-21 (PIAGSMVLAAVLLKLGGYGII), 34-54 (MFLPFIVLALWGAILANLTCL), 63-85 (IAYSSISHMGLVVAAIIIQTPWG), 89-111 (AMALMIAHGFTSSALFCLANTTY), 128-148 (ILPMTTTWWLLANLMNIATPP), 169-189 (TIILLGLSMLITASYSLHMFL), and 211-231 (LLMALHLVPLMMISMKPELII).

It belongs to the complex I subunit 4 family.

It is found in the mitochondrion membrane. The enzyme catalyses a ubiquinone + NADH + 5 H(+)(in) = a ubiquinol + NAD(+) + 4 H(+)(out). Its function is as follows. Core subunit of the mitochondrial membrane respiratory chain NADH dehydrogenase (Complex I) that is believed to belong to the minimal assembly required for catalysis. Complex I functions in the transfer of electrons from NADH to the respiratory chain. The immediate electron acceptor for the enzyme is believed to be ubiquinone. The chain is NADH-ubiquinone oxidoreductase chain 4 (MT-ND4) from Cerrophidion godmani (Porthidium godmani).